Here is a 358-residue protein sequence, read N- to C-terminus: DNA methyltransferase CcrM (358 aa).

A methyltransferase region spans residues 1-260 (MKFGPETIIH…AKVVPIAPED (260 aa)). DNA-binding regions (target strand DNA) lie at residues 31–34 (DPPY) and 39–45 (GGDLLRP). 2 consecutive DNA-binding regions (non-target strand DNA) follow at residues 93–94 (YH) and 109–110 (WI). H94 is a binding site for dsDNA. Residues 122 to 132 (MPNFKGTRFAN) constitute a DNA-binding region (target strand DNA). Residues 153–157 (YDALK) constitute a DNA-binding region (non-target strand DNA). 2 residues coordinate dsDNA: Q164 and R179. A DNA-binding region (target strand DNA) is located at residues 187–193 (KAHPTQK). Residues 259 to 355 (EDLDVMGSKR…IDVLRAQVRA (97 aa)) enclose the RAMA domain. A linker region spans residues 261–270 (LDVMGSKRAE). DsDNA contacts are provided by K267 and R272. Residues 272–358 (RVPFGTIVEA…LRAQVRAGMN (87 aa)) are non-specific DNA-binding. 2 consecutive DNA-binding regions (non-target strand DNA) follow at residues 315–317 (SIH) and 330–332 (NGW). R350 provides a ligand contact to dsDNA.

Belongs to the N(4)/N(6)-methyltransferase family. Homodimer. Rapidly degraded by Lon protease prior to cell division.

It carries out the reaction a 2'-deoxyadenosine in DNA + S-adenosyl-L-methionine = an N(6)-methyl-2'-deoxyadenosine in DNA + S-adenosyl-L-homocysteine + H(+). Functionally, a beta subtype methylase that recognizes the double-stranded sequence 5'-GANTC-3' and methylates non-modifed A-2 on the hemimethylated, post-replicative DNA. Opens a bubble in the DNA at the recognition site, allowing precise recognition of the sequence and ensuring enzyme specificity. Functions only in the predivisional cell. Responsible for 5'-GANTC-3' methylation in the cell; methylation of hemimethylated sites generated after replication fork passage occurs late in the predivisional cell, near completion of chromosome replication but prior to cell division. Contributes to the accurate cell-cycle control of DNA replication and cellular morphology. The polypeptide is DNA methyltransferase CcrM (ccrMIM) (Caulobacter vibrioides (strain ATCC 19089 / CIP 103742 / CB 15) (Caulobacter crescentus)).